Consider the following 447-residue polypeptide: N-succinylarginine dihydrolase (447 aa).

Substrate contacts are provided by residues 19–28 (AGLSFGNVAS), asparagine 110, and 137–138 (HR). Glutamate 174 is an active-site residue. Residue arginine 214 participates in substrate binding. Histidine 250 is a catalytic residue. Positions 252 and 364 each coordinate substrate. Cysteine 370 (nucleophile) is an active-site residue.

It belongs to the succinylarginine dihydrolase family. In terms of assembly, homodimer.

It catalyses the reaction N(2)-succinyl-L-arginine + 2 H2O + 2 H(+) = N(2)-succinyl-L-ornithine + 2 NH4(+) + CO2. It functions in the pathway amino-acid degradation; L-arginine degradation via AST pathway; L-glutamate and succinate from L-arginine: step 2/5. Functionally, catalyzes the hydrolysis of N(2)-succinylarginine into N(2)-succinylornithine, ammonia and CO(2). This Idiomarina loihiensis (strain ATCC BAA-735 / DSM 15497 / L2-TR) protein is N-succinylarginine dihydrolase.